The sequence spans 1192 residues: Pyruvate carboxylase (1192 aa).

Residues 1–23 form a disordered region; that stretch reads MAAPRQPEEAVDDTEFIDDHHDQ. Residues 40–492 form the Biotin carboxylation domain; the sequence is QFQKILVANR…WTTFIDDTPE (453 aa). Residues K158, E242, and H277 each contribute to the ATP site. The ATP-grasp domain maps to 162-359; that stretch reads RQLAIRCDVP…IVAAQIQIAA (198 aa). R334 is an active-site residue. One can recognise a Pyruvate carboxyltransferase domain in the interval 578–846; sequence CLIMDTTWRD…DPGLNSAQVR (269 aa). Substrate is bound by residues 586–590 and R659; that span reads RDAHQ. A divalent metal cation is bound at residue D587. A divalent metal cation is bound by residues K755, H785, and H787. Position 755 is an N6-carboxylysine (K755). T920 contacts substrate. Residues 1115-1190 enclose the Biotinyl-binding domain; that stretch reads KAELGDSSQV…DGQDLVCKIV (76 aa). The residue at position 1156 (K1156) is an N6-biotinyllysine.

Requires biotin as cofactor. Zn(2+) is required as a cofactor.

It is found in the cytoplasm. The enzyme catalyses hydrogencarbonate + pyruvate + ATP = oxaloacetate + ADP + phosphate + H(+). The protein operates within carbohydrate biosynthesis; gluconeogenesis. Functionally, pyruvate carboxylase catalyzes a 2-step reaction, involving the ATP-dependent carboxylation of the covalently attached biotin in the first step and the transfer of the carboxyl group to pyruvate in the second. The polypeptide is Pyruvate carboxylase (pyc) (Aspergillus niger).